Consider the following 270-residue polypeptide: NAD kinase (270 aa).

Asp61 (proton acceptor) is an active-site residue. Residues 61 to 62, 133 to 134, Arg144, Arg163, Asp165, and 176 to 181 contribute to the NAD(+) site; these read DG, NE, and TAYNLS.

It belongs to the NAD kinase family. It depends on a divalent metal cation as a cofactor.

The protein resides in the cytoplasm. It catalyses the reaction NAD(+) + ATP = ADP + NADP(+) + H(+). Its function is as follows. Involved in the regulation of the intracellular balance of NAD and NADP, and is a key enzyme in the biosynthesis of NADP. Catalyzes specifically the phosphorylation on 2'-hydroxyl of the adenosine moiety of NAD to yield NADP. The polypeptide is NAD kinase (Natronomonas pharaonis (strain ATCC 35678 / DSM 2160 / CIP 103997 / JCM 8858 / NBRC 14720 / NCIMB 2260 / Gabara) (Halobacterium pharaonis)).